Consider the following 421-residue polypeptide: UDP-N-acetylglucosamine 1-carboxyvinyltransferase (421 aa).

22 to 23 provides a ligand contact to phosphoenolpyruvate; the sequence is KN. R93 serves as a coordination point for UDP-N-acetyl-alpha-D-glucosamine. The active-site Proton donor is C117. C117 carries the post-translational modification 2-(S-cysteinyl)pyruvic acid O-phosphothioketal. Residues 122-126, D309, and I331 each bind UDP-N-acetyl-alpha-D-glucosamine; that span reads RPVDQ.

The protein belongs to the EPSP synthase family. MurA subfamily.

It is found in the cytoplasm. It carries out the reaction phosphoenolpyruvate + UDP-N-acetyl-alpha-D-glucosamine = UDP-N-acetyl-3-O-(1-carboxyvinyl)-alpha-D-glucosamine + phosphate. Its pathway is cell wall biogenesis; peptidoglycan biosynthesis. In terms of biological role, cell wall formation. Adds enolpyruvyl to UDP-N-acetylglucosamine. This Albidiferax ferrireducens (strain ATCC BAA-621 / DSM 15236 / T118) (Rhodoferax ferrireducens) protein is UDP-N-acetylglucosamine 1-carboxyvinyltransferase.